A 1280-amino-acid chain; its full sequence is E3 ubiquitin-protein ligase RKP (1280 aa).

The B30.2/SPRY domain maps to 82 to 269 (KLHGDLDVSV…CELNFGAYPF (188 aa)). Residues 551–571 (SVLVSLFSVILHFLSEGFAML) traverse the membrane as a helical segment. Positions 669–719 (DRGKNTAQSSRGRCSSIPERSSHVAAECSAGSFSEEIDDKPSTSNQSDPDF) are disordered. The helical transmembrane segment at 834 to 854 (ALCMWVVQLLLVLSKMDSVFV) threads the bilayer. The segment at 1217–1252 (CCICYAGEANAMIAPCSHRSCYGCITRHLLNCQRCF) adopts an RING-type zinc-finger fold.

The protein localises to the membrane. It catalyses the reaction S-ubiquitinyl-[E2 ubiquitin-conjugating enzyme]-L-cysteine + [acceptor protein]-L-lysine = [E2 ubiquitin-conjugating enzyme]-L-cysteine + N(6)-ubiquitinyl-[acceptor protein]-L-lysine.. In terms of biological role, E3 ubiquitin-protein ligase that promotes the ubiquitination and proteasomal degradation of KRP1 and KRP2. This is E3 ubiquitin-protein ligase RKP (RKP) from Arabidopsis thaliana (Mouse-ear cress).